A 161-amino-acid polypeptide reads, in one-letter code: MPSFDVVSEANMIEVKNAIEQSNKEISTRFDFKGSDARVEQKERELTLFADDDFKLGQVKDVLINKLAKRNVDVRFLDYGKVEKIGGDKVKQIVTVKKGVTGDLAKKIVRLVKDSKIKVQASIQGDAVRVTGTKRDDLQSVIAMLRKEVTDTPLDFNNFRD.

This sequence belongs to the YajQ family.

Nucleotide-binding protein. This is Nucleotide-binding protein Bamb_2603 from Burkholderia ambifaria (strain ATCC BAA-244 / DSM 16087 / CCUG 44356 / LMG 19182 / AMMD) (Burkholderia cepacia (strain AMMD)).